The sequence spans 264 residues: Acyl-[acyl-carrier-protein]--UDP-N-acetylglucosamine O-acyltransferase (264 aa).

It belongs to the transferase hexapeptide repeat family. LpxA subfamily. In terms of assembly, homotrimer.

The protein localises to the cytoplasm. The catalysed reaction is a (3R)-hydroxyacyl-[ACP] + UDP-N-acetyl-alpha-D-glucosamine = a UDP-3-O-[(3R)-3-hydroxyacyl]-N-acetyl-alpha-D-glucosamine + holo-[ACP]. The protein operates within glycolipid biosynthesis; lipid IV(A) biosynthesis; lipid IV(A) from (3R)-3-hydroxytetradecanoyl-[acyl-carrier-protein] and UDP-N-acetyl-alpha-D-glucosamine: step 1/6. Its function is as follows. Involved in the biosynthesis of lipid A, a phosphorylated glycolipid that anchors the lipopolysaccharide to the outer membrane of the cell. This chain is Acyl-[acyl-carrier-protein]--UDP-N-acetylglucosamine O-acyltransferase, found in Rickettsia conorii (strain ATCC VR-613 / Malish 7).